Here is a 273-residue protein sequence, read N- to C-terminus: Putative peptidyl-prolyl cis-trans isomerase Cbf2 (273 aa).

Positions 1–21 (MKKFSLVAAALIAGVALNVNA) are cleaved as a signal peptide. The region spanning 131–228 (PARVQAKHIL…FGYHVILKEN (98 aa)) is the PpiC domain.

The enzyme catalyses [protein]-peptidylproline (omega=180) = [protein]-peptidylproline (omega=0). In Campylobacter jejuni subsp. jejuni serotype O:23/36 (strain 81-176), this protein is Putative peptidyl-prolyl cis-trans isomerase Cbf2 (cbf2).